The following is a 106-amino-acid chain: Large ribosomal subunit protein eL42Q (106 aa).

This sequence belongs to the eukaryotic ribosomal protein eL42 family.

In Candida maltosa (Yeast), this protein is Large ribosomal subunit protein eL42Q (RIM-C).